Here is a 78-residue protein sequence, read N- to C-terminus: Alpha-neurotoxin homolog 7 (78 aa).

Positions 1–21 (MKTLLLTLVVVTIVCLDFGYT) are cleaved as a signal peptide. 4 disulfides stabilise this stretch: Cys24–Cys42, Cys37–Cys57, Cys59–Cys70, and Cys71–Cys76.

Belongs to the three-finger toxin family. Short-chain subfamily. Orphan group XII sub-subfamily. As to expression, expressed by the venom gland.

Its subcellular location is the secreted. The protein is Alpha-neurotoxin homolog 7 of Micrurus corallinus (Brazilian coral snake).